Consider the following 126-residue polypeptide: Fluoride-specific ion channel FluC (126 aa).

Transmembrane regions (helical) follow at residues 4 to 24, 36 to 56, 67 to 85, and 101 to 121; these read LLLV…TSAW, GTLL…TASL, LFLA…SFNY, and AYLL…TLLV. Residues G75 and T78 each contribute to the Na(+) site.

It belongs to the fluoride channel Fluc/FEX (TC 1.A.43) family.

The protein localises to the cell inner membrane. The enzyme catalyses fluoride(in) = fluoride(out). With respect to regulation, na(+) is not transported, but it plays an essential structural role and its presence is essential for fluoride channel function. In terms of biological role, fluoride-specific ion channel. Important for reducing fluoride concentration in the cell, thus reducing its toxicity. The polypeptide is Fluoride-specific ion channel FluC (Anaeromyxobacter dehalogenans (strain 2CP-1 / ATCC BAA-258)).